A 269-amino-acid chain; its full sequence is RBPJ-interacting and tubulin-associated protein 1 (269 aa).

Residues 5–17 (VELAVSGIQTLPL) carry the Nuclear export signal motif. Disordered stretches follow at residues 37–101 (SLFG…NKYR) and 141–269 (FWTP…PPWK). Polar residues predominate over residues 62–77 (RTSGVGTGTSRASGAN). Positions 79-93 (SCETTSSSGSTPTLT) are enriched in low complexity. The Nuclear localization signal signature appears at 92-108 (LTPRKKNKYRLISHTPS). The segment at 128-156 (WMAKGDAAKLHSLFWTPPATPRGSHSPRP) is interaction with RBPJ/RBPSUH. Positions 156-269 (PRETPLRAIH…ATQKPKPPWK (114 aa)) are interaction with tubulin.

It belongs to the RITA family. In terms of assembly, interacts with RBPJ/RBPSUH.

Its subcellular location is the cytoplasm. It is found in the nucleus. The protein resides in the cytoskeleton. The protein localises to the microtubule organizing center. It localises to the centrosome. Tubulin-binding protein that acts as a negative regulator of Notch signaling pathway. Shuttles between the cytoplasm and the nucleus and mediates the nuclear export of RBPJ/RBPSUH, thereby preventing the interaction between RBPJ/RBPSUH and NICD product of Notch proteins (Notch intracellular domain), leading to down-regulate Notch-mediated transcription. May play a role in neurogenesis. This is RBPJ-interacting and tubulin-associated protein 1 (RITA1) from Ailuropoda melanoleuca (Giant panda).